The chain runs to 461 residues: D-phenylhydantoinase (461 aa).

A divalent metal cation contacts are provided by H59, H61, and K151. K151 bears the N6-carboxylysine mark. Residue Y156 coordinates substrate. H182 and H239 together coordinate a divalent metal cation. S286 lines the substrate pocket. D313 serves as a coordination point for a divalent metal cation. Residue N335 coordinates substrate.

It belongs to the metallo-dependent hydrolases superfamily. Hydantoinase/dihydropyrimidinase family. Homotetramer. A divalent metal cation is required as a cofactor. Post-translationally, carboxylation allows a single lysine to coordinate two divalent metal cations.

The enzyme catalyses D-5-phenylhydantoin + H2O = N-carbamoyl-D-phenylglycine + H(+). Its function is as follows. Catalyzes the stereospecific hydrolysis of the cyclic amide bond of D-hydantoin derivatives with an aromatic side chains at the 5'-position. Has no activity on dihydropyrimidines. The physiological function is unknown. This Escherichia coli O127:H6 (strain E2348/69 / EPEC) protein is D-phenylhydantoinase.